Reading from the N-terminus, the 208-residue chain is ATP-dependent Clp protease proteolytic subunit (208 aa).

The active-site Nucleophile is serine 106. Residue histidine 131 is part of the active site.

It belongs to the peptidase S14 family. In terms of assembly, fourteen ClpP subunits assemble into 2 heptameric rings which stack back to back to give a disk-like structure with a central cavity, resembling the structure of eukaryotic proteasomes.

It is found in the cytoplasm. The enzyme catalyses Hydrolysis of proteins to small peptides in the presence of ATP and magnesium. alpha-casein is the usual test substrate. In the absence of ATP, only oligopeptides shorter than five residues are hydrolyzed (such as succinyl-Leu-Tyr-|-NHMec, and Leu-Tyr-Leu-|-Tyr-Trp, in which cleavage of the -Tyr-|-Leu- and -Tyr-|-Trp bonds also occurs).. Its function is as follows. Cleaves peptides in various proteins in a process that requires ATP hydrolysis. Has a chymotrypsin-like activity. Plays a major role in the degradation of misfolded proteins. The polypeptide is ATP-dependent Clp protease proteolytic subunit (Roseobacter denitrificans (strain ATCC 33942 / OCh 114) (Erythrobacter sp. (strain OCh 114))).